The primary structure comprises 316 residues: Ornithine carbamoyltransferase (316 aa).

Carbamoyl phosphate is bound by residues 57–60 (STRT), Gln84, Arg108, and 135–138 (HPCQ). L-ornithine is bound by residues Asn166, Asp230, and 234-235 (SM). Residues 269-270 (CL) and Arg297 each bind carbamoyl phosphate.

This sequence belongs to the aspartate/ornithine carbamoyltransferase superfamily. OTCase family.

The protein resides in the cytoplasm. The enzyme catalyses carbamoyl phosphate + L-ornithine = L-citrulline + phosphate + H(+). Its pathway is amino-acid degradation; L-arginine degradation via ADI pathway; carbamoyl phosphate from L-arginine: step 2/2. In terms of biological role, reversibly catalyzes the transfer of the carbamoyl group from carbamoyl phosphate (CP) to the N(epsilon) atom of ornithine (ORN) to produce L-citrulline. This is Ornithine carbamoyltransferase from Bacillus cereus (strain AH187).